Here is a 227-residue protein sequence, read N- to C-terminus: uncharacterized protein (227 aa).

5 helical membrane-spanning segments follow: residues 27 to 47 (AVLP…FPLL), 63 to 83 (PAPP…AVLG), 126 to 146 (TIIL…IAGV), 153 to 173 (VFLG…TLAG), and 186 to 206 (FQLI…VSAA).

Belongs to the DedA family.

It localises to the cell membrane. This is an uncharacterized protein from Mycobacterium tuberculosis (strain CDC 1551 / Oshkosh).